The chain runs to 484 residues: Glycogen synthase (484 aa).

ADP-alpha-D-glucose is bound at residue K15.

Belongs to the glycosyltransferase 1 family. Bacterial/plant glycogen synthase subfamily.

It catalyses the reaction [(1-&gt;4)-alpha-D-glucosyl](n) + ADP-alpha-D-glucose = [(1-&gt;4)-alpha-D-glucosyl](n+1) + ADP + H(+). Its pathway is glycan biosynthesis; glycogen biosynthesis. Functionally, synthesizes alpha-1,4-glucan chains using ADP-glucose. This is Glycogen synthase from Syntrophotalea carbinolica (strain DSM 2380 / NBRC 103641 / GraBd1) (Pelobacter carbinolicus).